A 116-amino-acid chain; its full sequence is T-cell leukemia/lymphoma protein 1A (116 aa).

Belongs to the TCL1 family. As to quaternary structure, homodimer. Interacts with AKT1, AKT2 and AKT3 (via PH domain). Interacts with PNPT1; the interaction has no effect on PNPT1 exonuclease activity.

It localises to the cytoplasm. The protein localises to the nucleus. It is found in the microsome. Its subcellular location is the endoplasmic reticulum. Enhances the phosphorylation and activation of AKT1 and AKT2. Enhances cell proliferation, stabilizes mitochondrial membrane potential and promotes cell survival. In Mus musculus (Mouse), this protein is T-cell leukemia/lymphoma protein 1A (Tcl1a).